A 196-amino-acid chain; its full sequence is Acyl-homoserine-lactone synthase (196 aa).

This sequence belongs to the autoinducer synthase family.

The catalysed reaction is a fatty acyl-[ACP] + S-adenosyl-L-methionine = an N-acyl-L-homoserine lactone + S-methyl-5'-thioadenosine + holo-[ACP] + H(+). In terms of biological role, required for the synthesis of a yet unknown N-aceyl-homoserine lactone (N-aceyl-HSL), an autoinducer molecule which binds to PhzR and thus regulates phenazine production. This chain is Acyl-homoserine-lactone synthase (phzI), found in Pseudomonas fluorescens.